The primary structure comprises 311 residues: Sulfate adenylyltransferase subunit 2 (311 aa).

It belongs to the PAPS reductase family. CysD subfamily. In terms of assembly, heterodimer composed of CysD, the smaller subunit, and CysN.

The enzyme catalyses sulfate + ATP + H(+) = adenosine 5'-phosphosulfate + diphosphate. It functions in the pathway sulfur metabolism; hydrogen sulfide biosynthesis; sulfite from sulfate: step 1/3. Functionally, with CysN forms the ATP sulfurylase (ATPS) that catalyzes the adenylation of sulfate producing adenosine 5'-phosphosulfate (APS) and diphosphate, the first enzymatic step in sulfur assimilation pathway. APS synthesis involves the formation of a high-energy phosphoric-sulfuric acid anhydride bond driven by GTP hydrolysis by CysN coupled to ATP hydrolysis by CysD. The polypeptide is Sulfate adenylyltransferase subunit 2 (Methylobacterium sp. (strain 4-46)).